A 475-amino-acid chain; its full sequence is Aspartyl/glutamyl-tRNA(Asn/Gln) amidotransferase subunit B (475 aa).

Belongs to the GatB/GatE family. GatB subfamily. Heterotrimer of A, B and C subunits.

The catalysed reaction is L-glutamyl-tRNA(Gln) + L-glutamine + ATP + H2O = L-glutaminyl-tRNA(Gln) + L-glutamate + ADP + phosphate + H(+). It carries out the reaction L-aspartyl-tRNA(Asn) + L-glutamine + ATP + H2O = L-asparaginyl-tRNA(Asn) + L-glutamate + ADP + phosphate + 2 H(+). Functionally, allows the formation of correctly charged Asn-tRNA(Asn) or Gln-tRNA(Gln) through the transamidation of misacylated Asp-tRNA(Asn) or Glu-tRNA(Gln) in organisms which lack either or both of asparaginyl-tRNA or glutaminyl-tRNA synthetases. The reaction takes place in the presence of glutamine and ATP through an activated phospho-Asp-tRNA(Asn) or phospho-Glu-tRNA(Gln). This Thiobacillus denitrificans (strain ATCC 25259 / T1) protein is Aspartyl/glutamyl-tRNA(Asn/Gln) amidotransferase subunit B.